Here is a 141-residue protein sequence, read N- to C-terminus: Hemoglobin subunit alpha (141 aa).

Positions 1-141 constitute a Globin domain; sequence VLSPADKTNV…VSTVLTSKYR (141 aa). S3 is modified (phosphoserine). The residue at position 7 (K7) is an N6-succinyllysine. T8 is subject to Phosphothreonine. K11 carries the N6-succinyllysine modification. K16 is modified (N6-acetyllysine; alternate). K16 carries the N6-succinyllysine; alternate modification. Y24 carries the post-translational modification Phosphotyrosine. Phosphoserine is present on S35. K40 carries the post-translational modification N6-succinyllysine. S49 is subject to Phosphoserine. H58 is a binding site for O2. Residue H87 coordinates heme b. S102 is subject to Phosphoserine. T108 is modified (phosphothreonine). 2 positions are modified to phosphoserine: S124 and S131. A phosphothreonine mark is found at T134 and T137. Phosphoserine is present on S138.

Belongs to the globin family. In terms of assembly, heterotetramer of two alpha chains and two beta chains. Red blood cells.

Functionally, involved in oxygen transport from the lung to the various peripheral tissues. Its function is as follows. Hemopressin acts as an antagonist peptide of the cannabinoid receptor CNR1. Hemopressin-binding efficiently blocks cannabinoid receptor CNR1 and subsequent signaling. The polypeptide is Hemoglobin subunit alpha (HBA) (Cebus capucinus (White-faced sapajou)).